Reading from the N-terminus, the 1083-residue chain is Solute carrier family 12 member 7 (1083 aa).

A disordered region spans residues 1 to 55 (MPTNFTVVPVEARADGAGDEAAERTEEPESPESVDQTSPTPGDGNPRENSPFINN). Topologically, residues 1 to 119 (MPTNFTVVPV…RREVKAPRMG (119 aa)) are cytoplasmic. The span at 12 to 27 (ARADGAGDEAAERTEE) shows a compositional bias: basic and acidic residues. 2 positions are modified to phosphoserine: Ser-30 and Ser-33. Thr-37 bears the Phosphothreonine mark. Phosphoserine is present on residues Ser-50 and Ser-62. The discontinuously helical transmembrane segment at 120–142 (TFIGVYLPCLQNILGVILFLRLT) threads the bilayer. The K(+) site is built by Asn-131 and Ile-132. Val-135 provides a ligand contact to chloride. Residues 143-149 (WIVGAAG) lie on the Extracellular side of the membrane. Residues 150-172 (VMESFLIVAMCCTCTMLTAISMS) form a helical membrane-spanning segment. The Cytoplasmic portion of the chain corresponds to 173-196 (AIATNGVVPAGGSYYMISRSLGPE). A helical transmembrane segment spans residues 197–225 (FGGAVGLCFYLGTTFAGAMYILGTIEIFL). Over 226 to 249 (TYISPSAAIFQAETADGEAAALLN) the chain is Extracellular. Helical transmembrane passes span 250 to 271 (NMRV…VGVK) and 272 to 300 (YVNK…KTAF). Over 301–419 (APPDIPVCLL…PYVLTDIMTY (119 aa)) the chain is Extracellular. N-linked (GlcNAc...) (high mannose) asparagine glycosylation is present at Asn-312. Residues Asn-331 and Asn-344 are each glycosylated (N-linked (GlcNAc...) (complex) asparagine). An N-linked (GlcNAc...) (high mannose) asparagine glycan is attached at Asn-360. The chain crosses the membrane as a helical span at residues 420 to 440 (FTMLVGIYFPSVTGIMAGSNR). K(+) contacts are provided by Pro-429 and Thr-432. Position 429 (Pro-429) interacts with chloride. Residues Gly-433 and Ile-434 each coordinate chloride. Over 441-450 (SGDLKDAQKS) the chain is Cytoplasmic. A helical transmembrane segment spans residues 451 to 473 (IPTGTILAIVTTSFIYLSCIVLF). At 474–504 (GACIEGVVLRDKFGEALQGNLVIGMLAWPSP) the chain is on the extracellular side. The chain crosses the membrane as a helical span at residues 505-531 (WVIVIGSFFSTCGAGLQSLTGAPRLLQ). Over 532–554 (AIARDGIIPFLQVFGHGKANGEP) the chain is Cytoplasmic. Helical transmembrane passes span 555–573 (TWAL…LIAS) and 574–598 (LDSV…ACAV). Tyr-589 provides a ligand contact to chloride. Topologically, residues 599–612 (QTLLRTPNWRPRFK) are cytoplasmic. A run of 2 helical transmembrane segments spans residues 613–635 (FYHW…ICSW) and 636–651 (YYAL…IYKY). At 652 to 1083 (IEYRGAEKEW…GGREVITIYS (432 aa)) the chain is on the cytoplasmic side. The scissor helix stretch occupies residues 664 to 680 (GIRGLSLNAARYALLRV). Thr-973 and Thr-980 each carry phosphothreonine.

It belongs to the SLC12A transporter family. K/Cl co-transporter subfamily. In terms of assembly, homodimer; adopts a domain-swap conformation at the scissor helices connecting the transmembrane domain and C-terminal domain. Heterodimer with K-Cl cotransporter SLC12A5. In terms of processing, glycosylation at Asn-331 and Asn-344 is required for proper trafficking to the cell surface, and augments protein stability. In terms of tissue distribution, detected in proximal tubules in the kidney, in particular in basolateral membranes of intercalated cells in the cortical collecting duct.

It localises to the cell membrane. The catalysed reaction is K(+)(in) + chloride(in) = K(+)(out) + chloride(out). With respect to regulation, activated by N-ethylmaleimide (NEM). Inhibited by furosemide, DIDS and bumetanide. The inhibition is much stronger in the presence of 50 mM K(+) in the uptake medium. Inhibited by DIOA. Inhibited by WNK3. Mediates electroneutral potassium-chloride cotransport when activated by cell swelling. May mediate K(+) uptake into Deiters' cells in the cochlea and contribute to K(+) recycling in the inner ear. Important for the survival of cochlear outer and inner hair cells and the maintenance of the organ of Corti. May be required for basolateral Cl(-) extrusion in the kidney and contribute to renal acidification. The chain is Solute carrier family 12 member 7 (Slc12a7) from Mus musculus (Mouse).